The following is a 204-amino-acid chain: Holliday junction branch migration complex subunit RuvA (204 aa).

Residues Met-1 to Cys-64 are domain I. A domain II region spans residues Thr-65–Phe-143. The tract at residues Ile-144 to Ser-154 is flexible linker. Positions Ser-154–Met-204 are domain III.

It belongs to the RuvA family. As to quaternary structure, homotetramer. Forms an RuvA(8)-RuvB(12)-Holliday junction (HJ) complex. HJ DNA is sandwiched between 2 RuvA tetramers; dsDNA enters through RuvA and exits via RuvB. An RuvB hexamer assembles on each DNA strand where it exits the tetramer. Each RuvB hexamer is contacted by two RuvA subunits (via domain III) on 2 adjacent RuvB subunits; this complex drives branch migration. In the full resolvosome a probable DNA-RuvA(4)-RuvB(12)-RuvC(2) complex forms which resolves the HJ.

It localises to the cytoplasm. Functionally, the RuvA-RuvB-RuvC complex processes Holliday junction (HJ) DNA during genetic recombination and DNA repair, while the RuvA-RuvB complex plays an important role in the rescue of blocked DNA replication forks via replication fork reversal (RFR). RuvA specifically binds to HJ cruciform DNA, conferring on it an open structure. The RuvB hexamer acts as an ATP-dependent pump, pulling dsDNA into and through the RuvAB complex. HJ branch migration allows RuvC to scan DNA until it finds its consensus sequence, where it cleaves and resolves the cruciform DNA. This is Holliday junction branch migration complex subunit RuvA from Syntrophus aciditrophicus (strain SB).